Consider the following 88-residue polypeptide: Enticin (88 aa).

The N-terminal stretch at 1-19 is a signal peptide; the sequence is MKTALPLLLLTCLVAAVQS. Intrachain disulfides connect cysteine 25-cysteine 33, cysteine 40-cysteine 52, and cysteine 59-cysteine 67. A propeptide spanning residues 69 to 88 is cleaved from the precursor; the sequence is REQSQLNHDHLNNHTTTQQP.

In terms of assembly, binds to attractin and temptin.

Its subcellular location is the secreted. Functionally, a component of the complex of water-borne protein pheromones that stimulates attraction and mating behavior. This chain is Enticin, found in Aplysia californica (California sea hare).